The following is a 687-amino-acid chain: Calcium-binding protein SP84 (687 aa).

The N-terminal stretch at 1–19 (MMRAIYLLVVVCWAAAANA) is a signal peptide. EF-hand domains follow at residues 152–187 (LESDDITKFYKHLDNDKDNELKTEEVLKIQHTHKNK), 257–292 (LTEIDISLLYRSVDTNNDNKIIIDELKAFTGITDDV), 406–441 (KTEATVTRYMVEADIDKDSFICLEEFDEYMDIPHMV), 476–511 (IENAAFDTWFNHYDTNHNNKIEKEADGLLAKFNNDA), and 579–614 (MTERDIEDLFDELDHNDDHELTQQDFPDCWNDVKDL). Asp592, Asn594, Asp596, Glu598, and Asp603 together coordinate Ca(2+).

In terms of tissue distribution, expressed in salivary glands where expression is strongest in type III cells in the posterior lobe of the principal glands (at protein level). Not expressed in midgut, Malpighian tubules or epidermis.

Its subcellular location is the secreted. Binds calcium. During feeding of the phloem sap, protein is injected into sieve tubes of rice plants. This process may suppress the sieve-element clogging and facilitate continuous ingestion from sieve tubes. This chain is Calcium-binding protein SP84, found in Nephotettix cincticeps (Green rice leafhopper).